We begin with the raw amino-acid sequence, 787 residues long: Pleckstrin homology domain-containing family G member 6 (787 aa).

Positions 161–353 constitute a DH domain; the sequence is HQQEALWELL…ESFLRHINGQ (193 aa). The PH domain occupies 409-509; that stretch reads QLLLEGPVRV…WLEKTQHAQT (101 aa). The segment at 533-762 is disordered; the sequence is QGTESPSTRP…EPGNGKPRRL (230 aa). Positions 535 to 557 are enriched in low complexity; it reads TESPSTRPSTPSPSPEDSQSSAE. A compositionally biased stretch (basic and acidic residues) spans 724-742; it reads LRPRSLREDMLREIREELA.

In terms of assembly, interacts with MYH10. Interacts with ELMO1 and EZR (in an open conformation). Interacts with CSPP1.

It is found in the cell projection. The protein resides in the microvillus. It localises to the cytoplasm. The protein localises to the cytoskeleton. Its subcellular location is the spindle. It is found in the cleavage furrow. In terms of biological role, guanine nucleotide exchange factor activating the small GTPase RHOA, which, in turn, induces myosin filament formation. Also activates RHOG. Does not activate RAC1, or to a much lower extent than RHOA and RHOG. Part of a functional unit, involving PLEKHG6, MYH10 and RHOA, at the cleavage furrow to advance furrow ingression during cytokinesis. In epithelial cells, required for the formation of microvilli and membrane ruffles on the apical pole. Along with EZR, required for normal macropinocytosis. This chain is Pleckstrin homology domain-containing family G member 6 (Plekhg6), found in Mus musculus (Mouse).